The following is a 168-amino-acid chain: Protein-export protein SecB (168 aa).

Belongs to the SecB family. As to quaternary structure, homotetramer, a dimer of dimers. One homotetramer interacts with 1 SecA dimer.

It localises to the cytoplasm. One of the proteins required for the normal export of preproteins out of the cell cytoplasm. It is a molecular chaperone that binds to a subset of precursor proteins, maintaining them in a translocation-competent state. It also specifically binds to its receptor SecA. This Sinorhizobium medicae (strain WSM419) (Ensifer medicae) protein is Protein-export protein SecB.